The chain runs to 234 residues: MAKLTKRMRNIREKVEVTKEYDINEAVALLKELATAKFTESVDVAVNLGIDARKSDQNVRGATVLPHGTGRDIRVAVFTQGANAEAAKEAGADLVGMEDLAELVKKGEMNFDVVVASPDAMRVVGQLGTILGPRGLMPNPKVGTVTPNVAEAVKNAKAGQVRYRNDKNGIIHTTIGKVDFDAAQLKENLEALLVALKKAKPTSAKGTFVKKVSISTTMGAGVSLDQATLNTQTN.

The protein belongs to the universal ribosomal protein uL1 family. In terms of assembly, part of the 50S ribosomal subunit.

Binds directly to 23S rRNA. The L1 stalk is quite mobile in the ribosome, and is involved in E site tRNA release. In terms of biological role, protein L1 is also a translational repressor protein, it controls the translation of the L11 operon by binding to its mRNA. The chain is Large ribosomal subunit protein uL1 from Aliivibrio fischeri (strain MJ11) (Vibrio fischeri).